A 203-amino-acid chain; its full sequence is Methyltransferase-like 26 (203 aa).

The protein belongs to the UPF0585 family.

This chain is Methyltransferase-like 26, found in Xenopus tropicalis (Western clawed frog).